Reading from the N-terminus, the 612-residue chain is Dihydroxy-acid dehydratase (612 aa).

D81 lines the Mg(2+) pocket. C122 lines the [2Fe-2S] cluster pocket. Residues D123 and K124 each contribute to the Mg(2+) site. N6-carboxylysine is present on K124. C195 contributes to the [2Fe-2S] cluster binding site. E491 is a Mg(2+) binding site. S517 (proton acceptor) is an active-site residue.

The protein belongs to the IlvD/Edd family. In terms of assembly, homodimer. The cofactor is [2Fe-2S] cluster. Mg(2+) serves as cofactor.

The enzyme catalyses (2R)-2,3-dihydroxy-3-methylbutanoate = 3-methyl-2-oxobutanoate + H2O. It carries out the reaction (2R,3R)-2,3-dihydroxy-3-methylpentanoate = (S)-3-methyl-2-oxopentanoate + H2O. The protein operates within amino-acid biosynthesis; L-isoleucine biosynthesis; L-isoleucine from 2-oxobutanoate: step 3/4. Its pathway is amino-acid biosynthesis; L-valine biosynthesis; L-valine from pyruvate: step 3/4. Its function is as follows. Functions in the biosynthesis of branched-chain amino acids. Catalyzes the dehydration of (2R,3R)-2,3-dihydroxy-3-methylpentanoate (2,3-dihydroxy-3-methylvalerate) into 2-oxo-3-methylpentanoate (2-oxo-3-methylvalerate) and of (2R)-2,3-dihydroxy-3-methylbutanoate (2,3-dihydroxyisovalerate) into 2-oxo-3-methylbutanoate (2-oxoisovalerate), the penultimate precursor to L-isoleucine and L-valine, respectively. This Bartonella tribocorum (strain CIP 105476 / IBS 506) protein is Dihydroxy-acid dehydratase.